Consider the following 543-residue polypeptide: Chaperonin GroEL 4 (543 aa).

ATP contacts are provided by residues 29–32, 86–90, Gly-411, 476–478, and Asp-492; these read TLGP, DGTTT, and DAA.

Belongs to the chaperonin (HSP60) family. As to quaternary structure, forms a cylinder of 14 subunits composed of two heptameric rings stacked back-to-back. Interacts with the co-chaperonin GroES.

The protein resides in the cytoplasm. The catalysed reaction is ATP + H2O + a folded polypeptide = ADP + phosphate + an unfolded polypeptide.. Its function is as follows. Together with its co-chaperonin GroES, plays an essential role in assisting protein folding. The GroEL-GroES system forms a nano-cage that allows encapsulation of the non-native substrate proteins and provides a physical environment optimized to promote and accelerate protein folding. This chain is Chaperonin GroEL 4, found in Bradyrhizobium diazoefficiens (strain JCM 10833 / BCRC 13528 / IAM 13628 / NBRC 14792 / USDA 110).